Reading from the N-terminus, the 55-residue chain is Large ribosomal subunit protein bL33A (55 aa).

This sequence belongs to the bacterial ribosomal protein bL33 family.

This Rhodococcus jostii (strain RHA1) protein is Large ribosomal subunit protein bL33A.